We begin with the raw amino-acid sequence, 652 residues long: 2-oxoglutarate carboxylase large subunit (652 aa).

One can recognise a Pyruvate carboxyltransferase domain in the interval 26–288 (ILITDLTPRD…DTGIDMKKLD (263 aa)). Substrate-binding positions include 34–38 (RDGQQ) and Arg-105. Asp-35 is an a divalent metal cation binding site. Positions 196, 227, and 229 each coordinate a divalent metal cation. Position 196 is an N6-carboxylysine (Lys-196). Residue Thr-362 coordinates substrate. Residues 563-643 (AEEKGIPKAT…TPDDALLRIK (81 aa)) enclose the Biotinyl-binding domain. N6-biotinyllysine is present on Lys-609.

As to quaternary structure, heterohexadecamer of 8 large subunits and 8 small subunits. Mg(2+) serves as cofactor. It depends on Mn(2+) as a cofactor. The cofactor is Co(2+). In terms of processing, biotinylated.

The catalysed reaction is hydrogencarbonate + 2-oxoglutarate + ATP = (S)-oxalosuccinate + ADP + phosphate + H(+). This chain is 2-oxoglutarate carboxylase large subunit, found in Hydrogenobacter thermophilus (strain DSM 6534 / IAM 12695 / TK-6).